A 258-amino-acid chain; its full sequence is tRNA pseudouridine synthase A (258 aa).

Aspartate 53 acts as the Nucleophile in catalysis. Tyrosine 111 is a substrate binding site.

Belongs to the tRNA pseudouridine synthase TruA family. Homodimer.

The catalysed reaction is uridine(38/39/40) in tRNA = pseudouridine(38/39/40) in tRNA. Its function is as follows. Formation of pseudouridine at positions 38, 39 and 40 in the anticodon stem and loop of transfer RNAs. The protein is tRNA pseudouridine synthase A of Streptococcus agalactiae serotype V (strain ATCC BAA-611 / 2603 V/R).